The sequence spans 172 residues: ATP synthase subunit b, chloroplastic (172 aa).

A helical transmembrane segment spans residues 15 to 37 (ILATNLINLSAVLGVLIFFGKGV).

This sequence belongs to the ATPase B chain family. In terms of assembly, F-type ATPases have 2 components, F(1) - the catalytic core - and F(0) - the membrane proton channel. F(1) has five subunits: alpha(3), beta(3), gamma(1), delta(1), epsilon(1). F(0) has four main subunits: a(1), b(1), b'(1) and c(10-14). The alpha and beta chains form an alternating ring which encloses part of the gamma chain. F(1) is attached to F(0) by a central stalk formed by the gamma and epsilon chains, while a peripheral stalk is formed by the delta, b and b' chains.

It is found in the plastid. It localises to the chloroplast thylakoid membrane. In terms of biological role, f(1)F(0) ATP synthase produces ATP from ADP in the presence of a proton or sodium gradient. F-type ATPases consist of two structural domains, F(1) containing the extramembraneous catalytic core and F(0) containing the membrane proton channel, linked together by a central stalk and a peripheral stalk. During catalysis, ATP synthesis in the catalytic domain of F(1) is coupled via a rotary mechanism of the central stalk subunits to proton translocation. Its function is as follows. Component of the F(0) channel, it forms part of the peripheral stalk, linking F(1) to F(0). This chain is ATP synthase subunit b, chloroplastic, found in Pisum sativum (Garden pea).